Reading from the N-terminus, the 265-residue chain is MSELRFVRMGFGADRVEYQEAWDEQRRVHAARFVDEVPDTVLLLEHPPVYTAGRRTEDSERPLDGTPVIDVDRGGKITWHGPGQLVGYPIQKLPRPVDVVAHVRRLEEALIRTCAEFGLETSRVEGRSGVWVLGDPVEQRPVLGGLSLDFDPRLSDDEFDPRLNGPEYAPSNAGQRREDRKIAAIGIRVAKGVTMHGFALNVNPDNKWFDKIIPCGIRDAGVASLANELGRDVTIEEVLPVAERHLRDVLENAELKPRVIEKTPA.

One can recognise a BPL/LPL catalytic domain in the interval 35–254 (DEVPDTVLLL…HLRDVLENAE (220 aa)). Substrate contacts are provided by residues 73–80 (RGGKITWH), 184–186 (AIG), and 197–199 (GFA). The Acyl-thioester intermediate role is filled by cysteine 215.

This sequence belongs to the LipB family.

It is found in the cytoplasm. The catalysed reaction is octanoyl-[ACP] + L-lysyl-[protein] = N(6)-octanoyl-L-lysyl-[protein] + holo-[ACP] + H(+). It participates in protein modification; protein lipoylation via endogenous pathway; protein N(6)-(lipoyl)lysine from octanoyl-[acyl-carrier-protein]: step 1/2. Functionally, catalyzes the transfer of endogenously produced octanoic acid from octanoyl-acyl-carrier-protein onto the lipoyl domains of lipoate-dependent enzymes. Lipoyl-ACP can also act as a substrate although octanoyl-ACP is likely to be the physiological substrate. The chain is Octanoyltransferase from Streptomyces coelicolor (strain ATCC BAA-471 / A3(2) / M145).